The chain runs to 58 residues: Large ribosomal subunit protein bL32 (58 aa).

Over residues 1-15 the composition is skewed to basic residues; sequence MAVPKKKTSKAKRNQ. The segment at 1 to 23 is disordered; it reads MAVPKKKTSKAKRNQRSATWKGK.

The protein belongs to the bacterial ribosomal protein bL32 family.

This is Large ribosomal subunit protein bL32 from Parasynechococcus marenigrum (strain WH8102).